The following is a 371-amino-acid chain: Homeobox protein Nkx-2.1 (371 aa).

A DNA-binding region (homeobox) is located at residues 161–220 (RRKRRVLFSQAQVYELERRFKQQKYLSAPEREHLASMIHLTPTQVKIWFQNHRYKMKRQA). Disordered stretches follow at residues 219–294 (QAKD…QHQA) and 310–339 (GAGLGAHPGHQPGSAGQSPDLAHHAASPAA). The segment covering 233–243 (SGGGGGGGGTG) has biased composition (gly residues). Low complexity predominate over residues 244–253 (CPQQQQAQQQ). S254 bears the Phosphoserine mark. A compositionally biased stretch (low complexity) spans 272 to 294 (AGAPAPGAASLQGHAQQQAQHQA).

This sequence belongs to the NK-2 homeobox family. In terms of assembly, interacts with WWTR1. Phosphorylated on serine residues by STK3/MST2. In terms of tissue distribution, thyroid and lung.

Its subcellular location is the nucleus. Transcription factor that binds and activates the promoter of thyroid specific genes such as thyroglobulin, thyroperoxidase, and thyrotropin receptor. Crucial in the maintenance of the thyroid differentiation phenotype. May play a role in lung development and surfactant homeostasis. Forms a regulatory loop with GRHL2 that coordinates lung epithelial cell morphogenesis and differentiation. Activates the transcription of GNRHR and plays a role in enhancing the circadian oscillation of its gene expression. Represses the transcription of the circadian transcriptional repressor NR1D1. In Homo sapiens (Human), this protein is Homeobox protein Nkx-2.1.